Here is a 369-residue protein sequence, read N- to C-terminus: Homoserine O-succinyltransferase (369 aa).

Positions 49–328 (NAVFICHALT…RFDSTQSARM (280 aa)) constitute an AB hydrolase-1 domain. Ser-154 acts as the Nucleophile in catalysis. Arg-224 contacts substrate. Catalysis depends on residues Asp-317 and His-350. Substrate is bound at residue Asp-351.

The protein belongs to the AB hydrolase superfamily. MetX family. As to quaternary structure, homodimer.

Its subcellular location is the cytoplasm. It catalyses the reaction L-homoserine + succinyl-CoA = O-succinyl-L-homoserine + CoA. It participates in amino-acid biosynthesis; L-methionine biosynthesis via de novo pathway; O-succinyl-L-homoserine from L-homoserine: step 1/1. Functionally, transfers a succinyl group from succinyl-CoA to L-homoserine, forming succinyl-L-homoserine. The protein is Homoserine O-succinyltransferase of Nocardioides sp. (strain ATCC BAA-499 / JS614).